We begin with the raw amino-acid sequence, 713 residues long: MEVVEGRRKTCLDVVDSPSSRQKQTIAVSLVDGKNYPTRFLNSRTIDKLKQELNTSNLSTGEMSTNETLKNAQEVAGKLLSEENEDSISEHFDEYLGADKPGISFLTRLKTLESWFQSLSLQDRLTTLRTLLHHLPSQEISTLLSSSLTSSPSNSGLSLDKSLPSSPKGDSPSLSSSLPSLTTKSNLSGNLNMVTPASTQGPAFSSKHGFSNALSTASPIPVRTSSVSSTYLTQDREASSKNCLSKALAFSSIEPPASSASTSPRNTPTPSNNGTSINANVTSSLTSNSTGKTSKTTDLLIAASKKSLPSNSTPSKPNTSFFETPHNNIWDSRDRGAFSAPPAPFFPLGFSPHLNDESSRSRWSNISYSPPPPPPPPELLNHSPKSRPLGDKPYLFYRNNQIGPRTRTEGRSSITEGKPFLSSSLRFEHVPSANDLNSVVNARVEKSTGQPSTPLNRQHYFNELPHSTTPVTLPSLIHGSEIDRRRSGFCLNNFNSTPPFQPYHYEIGSGLPQQMHATNTILTNPIDPNSNISTPVGMHLCTLPYTYQPFSSVEKIETPPNNSKNQTYRRSSRGSNKTRKSISHSKNTDKHVGNELPQDIPSWLRSLRLHKYTNNLKDTDWDALVSLSDLDLQNRGIMALGARRKLLKSFQEVAPLVSSKKMNENLKAAKNQSSESLTSFKGHTDSEDLPSGSMSNEISSNSTKQDVSSSSMD.

The span at 154–188 (NSGLSLDKSLPSSPKGDSPSLSSSLPSLTTKSNLS) shows a compositional bias: low complexity. Disordered stretches follow at residues 154 to 208 (NSGL…SSKH), 254 to 336 (EPPA…RDRG), 356 to 389 (DESS…SRPL), 554 to 596 (EKIE…GNEL), and 667 to 713 (KAAK…SSMD). Polar residues-rich tracts occupy residues 189-208 (GNLN…SSKH) and 258-281 (SSAS…NANV). Low complexity-rich tracts occupy residues 282-297 (TSSL…SKTT) and 304-320 (SKKS…PNTS). The segment covering 321 to 330 (FFETPHNNIW) has biased composition (polar residues). Residues 369–378 (SPPPPPPPPE) show a composition bias toward pro residues. Polar residues predominate over residues 559-569 (PPNNSKNQTYR). Residues 570 to 583 (RSSRGSNKTRKSIS) show a composition bias toward basic residues. The region spanning 595–656 (ELPQDIPSWL…LKSFQEVAPL (62 aa)) is the SAM domain. Polar residues predominate over residues 670–681 (KNQSSESLTSFK). S673 is subject to Phosphoserine. A compositionally biased stretch (low complexity) spans 691-702 (SGSMSNEISSNS). A compositionally biased stretch (polar residues) spans 703–713 (TKQDVSSSSMD).

The protein belongs to the VTS1 family. As to quaternary structure, monomer. Binds to RNA.

The protein resides in the cytoplasm. It is found in the cytosol. It localises to the P-body. Its function is as follows. RNA-binding protein involved in post-transcriptional regulation through transcript degradation. This Schizosaccharomyces pombe (strain 972 / ATCC 24843) (Fission yeast) protein is RNA-binding protein vts1.